The chain runs to 668 residues: Probable 6-phosphofructo-2-kinase PB17E12.14c (668 aa).

Positions 1–14 (MSNNNNKDDSELQS) are enriched in basic and acidic residues. Disordered regions lie at residues 1–105 (MSNN…GSRP) and 136–185 (HRVP…EATN). Composition is skewed to polar residues over residues 46 to 56 (NDHSFTNTDSV), 65 to 86 (SPVS…QNSP), and 164 to 184 (SSMS…SEAT). Residue 197–204 (GLPARGKS) coordinates ATP. Active-site residues include Asp281 and Cys312. Residue Arg346 participates in beta-D-fructose 6-phosphate binding. The active site involves Glu540. His608 functions as the Proton donor in the catalytic mechanism.

It carries out the reaction beta-D-fructose 6-phosphate + ATP = beta-D-fructose 2,6-bisphosphate + ADP + H(+). Its function is as follows. Synthesis of fructose 2,6-bisphosphate. This Schizosaccharomyces pombe (strain 972 / ATCC 24843) (Fission yeast) protein is Probable 6-phosphofructo-2-kinase PB17E12.14c.